A 224-amino-acid polypeptide reads, in one-letter code: Ras-related protein Rab-32C (224 aa).

The interval 1 to 22 (MYSNKNDKDKDKDQNNENNKNN) is disordered. 35 to 42 (GKLACGKT) is a binding site for GTP. An Effector region motif is present at residues 57-65 (YKPTIGVDF). GTP-binding positions include 83-87 (DIAGQ) and 142-145 (NKCD). The segment at 203–224 (GFKLSDQSQSTETTPTQSKTCC) is disordered. The span at 209–224 (QSQSTETTPTQSKTCC) shows a compositional bias: low complexity. Residues cysteine 223 and cysteine 224 are each lipidated (S-geranylgeranyl cysteine).

It belongs to the small GTPase superfamily. Rab family.

In Dictyostelium discoideum (Social amoeba), this protein is Ras-related protein Rab-32C (rab32C).